The following is a 1143-amino-acid chain: DNA polymerase III subunit alpha (1143 aa).

Belongs to the DNA polymerase type-C family. DnaE subfamily. In terms of assembly, DNA polymerase III contains a core (composed of alpha, epsilon and theta chains) that associates with a tau subunit. This core dimerizes to form the PolIII' complex. PolIII' associates with the gamma complex (composed of gamma, delta, delta', psi and chi chains) and with the beta chain to form the complete DNA polymerase III complex.

It is found in the cytoplasm. The catalysed reaction is DNA(n) + a 2'-deoxyribonucleoside 5'-triphosphate = DNA(n+1) + diphosphate. Functionally, DNA polymerase III is a complex, multichain enzyme responsible for most of the replicative synthesis in bacteria. This DNA polymerase also exhibits 3' to 5' exonuclease activity. The alpha chain is the DNA polymerase. In Caulobacter vibrioides (strain NA1000 / CB15N) (Caulobacter crescentus), this protein is DNA polymerase III subunit alpha (dnaE1).